The following is a 150-amino-acid chain: Mating pheromone 1 (150 aa).

A signal peptide spans 1 to 16 (MKAIFIILAILMVTQA). Positions 17–52 (FKMTSKVNTKLQSQIQSKFQSKNKLASTFQTSSKLK) are excised as a propeptide.

The protein localises to the secreted. Mating ciliate pheromones (or gamones) are diffusible extracellular communication signals that distinguish different intraspecific classes of cells commonly referred to as 'mating types'. They prepare the latter for conjugation by changing their cell surface properties. This is Mating pheromone 1 from Euplotoides octocarinatus (Freshwater ciliate).